The following is a 171-amino-acid chain: Photosystem I assembly protein Ycf3 (171 aa).

TPR repeat units follow at residues 35-68, 72-105, and 120-153; these read AFTY…EIDP, SYIL…NPSL, and GEQA…APSN.

Belongs to the Ycf3 family.

Its subcellular location is the plastid. The protein resides in the chloroplast thylakoid membrane. In terms of biological role, essential for the assembly of the photosystem I (PSI) complex. May act as a chaperone-like factor to guide the assembly of the PSI subunits. The chain is Photosystem I assembly protein Ycf3 from Angiopteris evecta (Mule's foot fern).